Reading from the N-terminus, the 71-residue chain is UPF0346 protein BcerKBAB4_2120 (71 aa).

It belongs to the UPF0346 family.

In Bacillus mycoides (strain KBAB4) (Bacillus weihenstephanensis), this protein is UPF0346 protein BcerKBAB4_2120.